The following is a 346-amino-acid chain: Elongation factor Ts (346 aa).

The segment at 80-83 is involved in Mg(2+) ion dislocation from EF-Tu; sequence TDFV.

This sequence belongs to the EF-Ts family.

The protein localises to the cytoplasm. Functionally, associates with the EF-Tu.GDP complex and induces the exchange of GDP to GTP. It remains bound to the aminoacyl-tRNA.EF-Tu.GTP complex up to the GTP hydrolysis stage on the ribosome. The protein is Elongation factor Ts of Streptococcus pneumoniae (strain 70585).